We begin with the raw amino-acid sequence, 551 residues long: MYRLLSSVTARAAATAGPAWDGGRRGAHRRPGLPVLGLGWAGGLGLGLGLALGAKLVVGLRGAVPIQSPADPEASGTTELSHEQALSPGSPHTPAPPAARGFSRAIESSRDLLHRIKDEVGAPGIVVGVSVDGKEVWSEGLGYADVENRVPCKPETVMRIASISKSLTMVALAKLWEAGKLDLDLPVQHYVPEFPEKEYEGEKVSVTTRLLISHLSGIRHYEKDIKKVKEEKAYKALKMVKGTPPPSDQEKELKEKGGKNNEKSDAPKAKVEQDSEARCRSAKPGKKKNDFEQGELYLKEKFENSIESLRLFKNDPLFFKPGSQFLYSTFGYTLLAAIVERASGYKYLDYMQKIFHDLDMLTTVQEENEPVIYNRARFYVYNKKKRLVNTPYVDNSYKWAGGGFLSTVGDLLKFGNAMLYGYQVGQFKNSNENLLPGYLKPETMVMMWTPVPNTEMSWDKEGKYAMAWGVVEKKQTYGSCRKQRHYASHTGGAVGASSVLLVLPEELDSEAVNNKVPPRGIIVSIICNMQSVGLNSTALKIALEFDKDRAD.

A mitochondrion-targeting transit peptide spans Met-1–Leu-113. A disordered region spans residues Pro-69–Gly-101. Ser-162 functions as the Acyl-ester intermediate in the catalytic mechanism. Residues Leu-237–Lys-287 form a disordered region. Basic and acidic residues predominate over residues Asp-248–Cys-279. An N6-succinyllysine mark is found at Lys-287 and Lys-288. Lys-301 and Lys-346 each carry N6-acetyllysine.

This sequence belongs to the peptidase S12 family. As to expression, expressed predominantly in liver.

Its subcellular location is the mitochondrion. Its function is as follows. Mitochondrial serine protease that acts as a regulator of mitochondrial lipid metabolism. Acts by decreasing protein levels of PISD, a mitochondrial enzyme that converts phosphatidylserine (PtdSer) to phosphatidylethanolamine (PtdEtn), thereby affecting mitochondrial lipid metabolism. It is unclear whether it acts directly by mediating proteolysis of PISD or by mediating proteolysis of another lipid metabolism protein. Acts as a tumor suppressor that has the ability to inhibit proliferation of multiple types of cancer cells: probably by promoting decreased levels of PISD, thereby affecting mitochondrial lipid metabolism. The sequence is that of Serine beta-lactamase-like protein LACTB, mitochondrial from Mus musculus (Mouse).